Here is a 134-residue protein sequence, read N- to C-terminus: Small ribosomal subunit protein eS24A (134 aa).

S2 carries the N-acetylserine modification. The tract at residues 100-134 (IQKVARQQRKQRKNRGKKVFGTGKRLAKRKSKQQD) is disordered. Composition is skewed to basic residues over residues 105–117 (RQQR…RGKK) and 124–134 (RLAKRKSKQQD).

Belongs to the eukaryotic ribosomal protein eS24 family. As to quaternary structure, component of the small ribosomal subunit (SSU). Mature yeast ribosomes consist of a small (40S) and a large (60S) subunit. The 40S small subunit contains 1 molecule of ribosomal RNA (18S rRNA) and at least 33 different proteins. The large 60S subunit contains 3 rRNA molecules (25S, 5.8S and 5S rRNA) and at least 46 different proteins.

The protein resides in the cytoplasm. Functionally, component of the ribosome, a large ribonucleoprotein complex responsible for the synthesis of proteins in the cell. The small ribosomal subunit (SSU) binds messenger RNAs (mRNAs) and translates the encoded message by selecting cognate aminoacyl-transfer RNA (tRNA) molecules. The large subunit (LSU) contains the ribosomal catalytic site termed the peptidyl transferase center (PTC), which catalyzes the formation of peptide bonds, thereby polymerizing the amino acids delivered by tRNAs into a polypeptide chain. The nascent polypeptides leave the ribosome through a tunnel in the LSU and interact with protein factors that function in enzymatic processing, targeting, and the membrane insertion of nascent chains at the exit of the ribosomal tunnel. The protein is Small ribosomal subunit protein eS24A (rps2401) of Schizosaccharomyces pombe (strain 972 / ATCC 24843) (Fission yeast).